We begin with the raw amino-acid sequence, 77 residues long: Translational regulator CsrA (77 aa).

Residues 58-77 are disordered; sequence ANRRTAEETLDQASRLLSQK. The span at 68 to 77 shows a compositional bias: polar residues; sequence DQASRLLSQK.

It belongs to the CsrA/RsmA family. Homodimer; the beta-strands of each monomer intercalate to form a hydrophobic core, while the alpha-helices form wings that extend away from the core.

It is found in the cytoplasm. A translational regulator that binds mRNA to regulate translation initiation and/or mRNA stability. Usually binds in the 5'-UTR at or near the Shine-Dalgarno sequence preventing ribosome-binding, thus repressing translation. Its main target seems to be the major flagellin gene, while its function is anatagonized by FliW. The chain is Translational regulator CsrA from Magnetococcus marinus (strain ATCC BAA-1437 / JCM 17883 / MC-1).